The primary structure comprises 194 residues: MYLINQNGWIEVICGSMFSGKSEELIRRVRRTQFAKQHAIVFKPCIDNRYSEEDVVSHNGLKVKAVPVSASKDIFKHITEEMDVIAIDEVQFFDGDIVEVVQVLANRGYRVIVAGLDQDFRGLPFGQVPQLMAIAEHVTKLQAVCSACGSPASRTQRLIDGEPAAFDDPIILVGASESYEPRCRHCHAVPTKQR.

Residues 15–22 (GSMFSGKS) and 88–91 (DEVQ) contribute to the ATP site. The Proton acceptor role is filled by Glu-89. Zn(2+) is bound by residues Cys-145, Cys-148, Cys-183, and Cys-186.

It belongs to the thymidine kinase family. Homotetramer.

Its subcellular location is the cytoplasm. The catalysed reaction is thymidine + ATP = dTMP + ADP + H(+). This Bacillus anthracis (strain A0248) protein is Thymidine kinase.